A 62-amino-acid polypeptide reads, in one-letter code: MKFIDLKDKDIAELQKMLKEKKSLLFEKRLQLKTMQLTNPSEIKVIRKDIARINTALSAKKD.

It belongs to the universal ribosomal protein uL29 family.

In Helicobacter hepaticus (strain ATCC 51449 / 3B1), this protein is Large ribosomal subunit protein uL29.